We begin with the raw amino-acid sequence, 190 residues long: Small ribosomal subunit protein mS23 (190 aa).

Alanine 2 carries the post-translational modification N-acetylalanine. Lysine 83 is subject to N6-succinyllysine. The residue at position 102 (lysine 102) is an N6-acetyllysine. Positions 137-190 (KARTQQEGSQVSRKSESMGVESQTALEENPPLKEVPQAQHLESPGEESKGLSPP) are disordered.

This sequence belongs to the mitochondrion-specific ribosomal protein mS23 family. Component of the mitochondrial ribosome small subunit (28S) which comprises a 12S rRNA and about 30 distinct proteins.

The protein resides in the mitochondrion. In Bos taurus (Bovine), this protein is Small ribosomal subunit protein mS23.